The primary structure comprises 180 residues: Peptide deformylase (180 aa).

Residues Cys88 and His130 each coordinate Fe cation. The active site involves Glu131. A Fe cation-binding site is contributed by His134.

The protein belongs to the polypeptide deformylase family. Fe(2+) is required as a cofactor.

It catalyses the reaction N-terminal N-formyl-L-methionyl-[peptide] + H2O = N-terminal L-methionyl-[peptide] + formate. In terms of biological role, removes the formyl group from the N-terminal Met of newly synthesized proteins. Requires at least a dipeptide for an efficient rate of reaction. N-terminal L-methionine is a prerequisite for activity but the enzyme has broad specificity at other positions. The polypeptide is Peptide deformylase (Acidothermus cellulolyticus (strain ATCC 43068 / DSM 8971 / 11B)).